A 1076-amino-acid polypeptide reads, in one-letter code: DNA-directed RNA polymerase subunit beta (1076 aa).

The protein belongs to the RNA polymerase beta chain family. In terms of assembly, in plastids the minimal PEP RNA polymerase catalytic core is composed of four subunits: alpha, beta, beta', and beta''. When a (nuclear-encoded) sigma factor is associated with the core the holoenzyme is formed, which can initiate transcription.

It localises to the plastid. Its subcellular location is the chloroplast. It carries out the reaction RNA(n) + a ribonucleoside 5'-triphosphate = RNA(n+1) + diphosphate. In terms of biological role, DNA-dependent RNA polymerase catalyzes the transcription of DNA into RNA using the four ribonucleoside triphosphates as substrates. In Lolium perenne (Perennial ryegrass), this protein is DNA-directed RNA polymerase subunit beta.